Reading from the N-terminus, the 66-residue chain is uncharacterized protein (66 aa).

Residues 1–25 (MIVIILLFISIIVFLSVIQPQPSKN) form the signal peptide. Residues 21–31 (QPSKNKSRQQA) show a composition bias toward polar residues. The segment at 21–66 (QPSKNKSRQQADSGYFGYSDHSSHHDGCSSDGGFSDSGCGGGGGGD) is disordered.

This is an uncharacterized protein from Bacillus subtilis (strain 168).